Here is a 231-residue protein sequence, read N- to C-terminus: Cytochrome b-c1 complex subunit Rieske, mitochondrial (231 aa).

The N-terminal 24 residues, 1 to 24 (MAPVSIVSRAAMRAAAAPARAVRA), are a transit peptide targeting the mitochondrion. The propeptide at 25–32 (LTTSTALQ) is removed in mature form. The Mitochondrial matrix segment spans residues 33–65 (GSSSSTFESPFKGESKAAKVPDFGKYMSKAPPS). A helical transmembrane segment spans residues 66 to 95 (TNMLFSYFMVGTMGAITAAGAKSTIQEFLK). Residues 96 to 231 (NMSASADVLA…FPEEGKLVIG (136 aa)) lie on the Mitochondrial intermembrane side of the membrane. Residues 134–229 (RHRTPAEIEE…YEFPEEGKLV (96 aa)) enclose the Rieske domain. Residues C174, H176, C193, and H196 each contribute to the [2Fe-2S] cluster site. Cysteines 179 and 195 form a disulfide.

It belongs to the Rieske iron-sulfur protein family. As to quaternary structure, component of the ubiquinol-cytochrome c oxidoreductase (cytochrome b-c1 complex, complex III, CIII), a multisubunit enzyme composed of 10 subunits. The complex is composed of 3 respiratory subunits cytochrome b (cob), cytochrome c1 (cyt-1) and Rieske protein (fes-1), 2 core protein subunits pep and ucr-1, and 5 low-molecular weight protein subunits qcr6, qcr7, qcr8, qcr9 and probably NCU16844/qcr10. The complex exists as an obligatory dimer and forms supercomplexes (SCs) in the inner mitochondrial membrane with NADH-ubiquinone oxidoreductase (complex I, CI) and cytochrome c oxidase (complex IV, CIV), resulting in different assemblies (supercomplexes SCI(1)III(2), SCIII(2)IV(1) and SCIII(2)IV(2) as well as higher order I(x)III(y)IV(z) megacomplexes). It depends on [2Fe-2S] cluster as a cofactor. Processed by both the mitochondrial processing peptidase (MPP) and the mitochondrial intermediate protease (MIP). Initially, MPP removes 25 amino acids from the newly imported precursor in the mitochondrial matrix. This proteolytic processing is then followed by a second proteolytic cleavage by MIP, which removes an octapeptide to generate mature-sized Rieske protein.

It is found in the mitochondrion inner membrane. The catalysed reaction is a quinol + 2 Fe(III)-[cytochrome c](out) = a quinone + 2 Fe(II)-[cytochrome c](out) + 2 H(+)(out). Its function is as follows. Component of the ubiquinol-cytochrome c oxidoreductase, a multisubunit transmembrane complex that is part of the mitochondrial electron transport chain which drives oxidative phosphorylation. The respiratory chain contains 3 multisubunit complexes succinate dehydrogenase (complex II, CII), ubiquinol-cytochrome c oxidoreductase (cytochrome b-c1 complex, complex III, CIII) and cytochrome c oxidase (complex IV, CIV), that cooperate to transfer electrons derived from NADH and succinate to molecular oxygen, creating an electrochemical gradient over the inner membrane that drives transmembrane transport and the ATP synthase. The cytochrome b-c1 complex catalyzes electron transfer from ubiquinol to cytochrome c, linking this redox reaction to translocation of protons across the mitochondrial inner membrane, with protons being carried across the membrane as hydrogens on the quinol. In the process called Q cycle, 2 protons are consumed from the matrix, 4 protons are released into the intermembrane space and 2 electrons are passed to cytochrome c. The Rieske protein is a catalytic core subunit containing a [2Fe-2S] iron-sulfur cluster. It cycles between 2 conformational states during catalysis to transfer electrons from the quinol bound in the Q(0) site in cytochrome b to cytochrome c1. This Neurospora crassa (strain ATCC 24698 / 74-OR23-1A / CBS 708.71 / DSM 1257 / FGSC 987) protein is Cytochrome b-c1 complex subunit Rieske, mitochondrial (fes-1).